The chain runs to 65 residues: Beta-defensin 17 (65 aa).

The signal sequence occupies residues 1–19 (MKFHLLFFILLFSITILTG). Disulfide bonds link Cys-35–Cys-63, Cys-42–Cys-56, and Cys-46–Cys-64.

The protein belongs to the beta-defensin family.

It localises to the secreted. Has antibacterial activity. The chain is Beta-defensin 17 (Defb17) from Rattus norvegicus (Rat).